Reading from the N-terminus, the 141-residue chain is Hemoglobin subunit alpha-D (141 aa).

The Globin domain occupies 1-141 (MLTADDKKLI…VAAVLAEKYR (141 aa)). Heme b is bound by residues His58 and His87.

It belongs to the globin family. As to quaternary structure, heterotetramer of two alpha-D chains and two beta chains. In terms of tissue distribution, red blood cells.

Involved in oxygen transport from the lung to the various peripheral tissues. The sequence is that of Hemoglobin subunit alpha-D (HBAD) from Aegypius monachus (Cinereous vulture).